The sequence spans 429 residues: Citrate synthase, plasmid (429 aa).

Catalysis depends on residues His306 and Asp364.

This sequence belongs to the citrate synthase family.

The enzyme catalyses oxaloacetate + acetyl-CoA + H2O = citrate + CoA + H(+). It participates in carbohydrate metabolism; tricarboxylic acid cycle; isocitrate from oxaloacetate: step 1/2. The exact function of the plasmid-encoded citrate synthase is not clear, it could help nodulation by allowing the bacteria to use citrate as a chelator of iron and calcium. In Rhizobium tropici, this protein is Citrate synthase, plasmid (pcsA).